A 212-amino-acid polypeptide reads, in one-letter code: Imidazole glycerol phosphate synthase subunit HisH (212 aa).

One can recognise a Glutamine amidotransferase type-1 domain in the interval 2-212 (KVAVIDYGMG…KNFLAWDGNV (211 aa)). C82 (nucleophile) is an active-site residue. Active-site residues include H190 and E192.

In terms of assembly, heterodimer of HisH and HisF.

Its subcellular location is the cytoplasm. The enzyme catalyses 5-[(5-phospho-1-deoxy-D-ribulos-1-ylimino)methylamino]-1-(5-phospho-beta-D-ribosyl)imidazole-4-carboxamide + L-glutamine = D-erythro-1-(imidazol-4-yl)glycerol 3-phosphate + 5-amino-1-(5-phospho-beta-D-ribosyl)imidazole-4-carboxamide + L-glutamate + H(+). The catalysed reaction is L-glutamine + H2O = L-glutamate + NH4(+). The protein operates within amino-acid biosynthesis; L-histidine biosynthesis; L-histidine from 5-phospho-alpha-D-ribose 1-diphosphate: step 5/9. IGPS catalyzes the conversion of PRFAR and glutamine to IGP, AICAR and glutamate. The HisH subunit catalyzes the hydrolysis of glutamine to glutamate and ammonia as part of the synthesis of IGP and AICAR. The resulting ammonia molecule is channeled to the active site of HisF. This Chromobacterium violaceum (strain ATCC 12472 / DSM 30191 / JCM 1249 / CCUG 213 / NBRC 12614 / NCIMB 9131 / NCTC 9757 / MK) protein is Imidazole glycerol phosphate synthase subunit HisH.